A 236-amino-acid polypeptide reads, in one-letter code: 1-(5-phosphoribosyl)-5-[(5-phosphoribosylamino)methylideneamino] imidazole-4-carboxamide isomerase (236 aa).

Catalysis depends on Asp-8, which acts as the Proton acceptor. The active-site Proton donor is Asp-128.

This sequence belongs to the HisA/HisF family.

Its subcellular location is the cytoplasm. The catalysed reaction is 1-(5-phospho-beta-D-ribosyl)-5-[(5-phospho-beta-D-ribosylamino)methylideneamino]imidazole-4-carboxamide = 5-[(5-phospho-1-deoxy-D-ribulos-1-ylimino)methylamino]-1-(5-phospho-beta-D-ribosyl)imidazole-4-carboxamide. Its pathway is amino-acid biosynthesis; L-histidine biosynthesis; L-histidine from 5-phospho-alpha-D-ribose 1-diphosphate: step 4/9. This chain is 1-(5-phosphoribosyl)-5-[(5-phosphoribosylamino)methylideneamino] imidazole-4-carboxamide isomerase, found in Nitrosopumilus maritimus (strain SCM1).